The following is a 307-amino-acid chain: Serine/threonine-protein phosphatase 4 catalytic subunit (307 aa).

Alanine 2 bears the N-acetylalanine mark. Residues aspartate 54, histidine 56, aspartate 82, and asparagine 114 each contribute to the Mn(2+) site. Histidine 115 functions as the Proton donor in the catalytic mechanism. Mn(2+) is bound by residues histidine 164 and histidine 238. Leucine 307 carries the leucine methyl ester modification.

This sequence belongs to the PPP phosphatase family. PP-4 (PP-X) subfamily. In terms of assembly, serine/threonine-protein phosphatase 4 (PP4) occurs in different assemblies of the catalytic and one or more regulatory subunits. Component of the PP4 complexes PPP4C-PPP4R1, PPP4C-PPP4R2, PPP4C-PPP4R2-PPP4R3A, PPP4C-PPP4R2-PPP4R3B and PPP4C-PPP4R4. The PPP4C-PPP4R2 complex appears to be a tetramer composed of 2 molecules of PPP4C and 2 molecules of PPP4R2. Interacts with REL, NFKB1/p50 and RELA. Interacts with SMN1 and GEMIN4. Interacts with IRS4 (phosphorylated). Interacts with SMEK1/PPP4R3A; the interaction requires PP4R2. Interacts with HDAC3. Mn(2+) is required as a cofactor. In terms of processing, methylation at the C-terminal Leu-307 is critical for interactions with regulatory subunits and functions in DNA repair.

Its subcellular location is the cytoplasm. It localises to the nucleus. The protein resides in the cytoskeleton. It is found in the microtubule organizing center. The protein localises to the centrosome. The catalysed reaction is O-phospho-L-seryl-[protein] + H2O = L-seryl-[protein] + phosphate. It catalyses the reaction O-phospho-L-threonyl-[protein] + H2O = L-threonyl-[protein] + phosphate. Functionally, protein phosphatase that is involved in many processes such as microtubule organization at centrosomes, maturation of spliceosomal snRNPs, apoptosis, DNA repair, tumor necrosis factor (TNF)-alpha signaling, activation of c-Jun N-terminal kinase MAPK8, regulation of histone acetylation, DNA damage checkpoint signaling, NF-kappa-B activation and cell migration. The PPP4C-PPP4R1 PP4 complex may play a role in dephosphorylation and regulation of HDAC3. The PPP4C-PPP4R2-PPP4R3A PP4 complex specifically dephosphorylates H2AX phosphorylated on Ser-140 (gamma-H2AX) generated during DNA replication and required for DNA double strand break repair. Dephosphorylates NDEL1 at CDK1 phosphorylation sites and negatively regulates CDK1 activity in interphase. In response to DNA damage, catalyzes RPA2 dephosphorylation, an essential step for DNA repair since it allows the efficient RPA2-mediated recruitment of RAD51 to chromatin. This chain is Serine/threonine-protein phosphatase 4 catalytic subunit (PPP4C), found in Homo sapiens (Human).